The primary structure comprises 306 residues: Mitochondrial substrate carrier family protein ucpA (306 aa).

At 1-15 (MSVNLNNNKNNKNKV) the chain is on the mitochondrial intermembrane side. Solcar repeat units follow at residues 13–103 (NKVA…ISNA), 112–204 (YFFL…CKNL), and 211–301 (DGIY…FKKL). The helical transmembrane segment at 16–36 (AIGFISGSLASICATTVTNPI) threads the bilayer. The Mitochondrial matrix segment spans residues 37–83 (ELVKTRLQLQGELQLSQRIYNGVWDAFKQIYKTEGIRGLQSGLIPAY). The helical transmembrane segment at 84–103 (FSQATMQGIRLGSFDLISNA) threads the bilayer. The Mitochondrial intermembrane segment spans residues 104 to 117 (LGAKPNQDYFFLKN). Residues 118-138 (LLAGATAGAIGAAAGSPFDLV) traverse the membrane as a helical segment. Residues 139-174 (KVRMQAANMYKNDPQFVGYSSSFAAFKQIIQKEGFK) lie on the Mitochondrial matrix side of the membrane. Residues 175 to 195 (GLTRGMLTSAQRTAVGSAIQL) traverse the membrane as a helical segment. The Mitochondrial intermembrane portion of the chain corresponds to 196 to 211 (STYGSCKNLVLNFVDD). A helical transmembrane segment spans residues 212 to 232 (GIYAYIISSMVAGFIVTFGMN). Residues 233-276 (PFDVARTRLYFQGKGNSHGEIYKGLMDCVYKTVKKEGFGAVYKG) lie on the Mitochondrial matrix side of the membrane. The helical transmembrane segment at 277 to 295 (FWAHYLRLGPHTILTLVFW) threads the bilayer. Over 296-306 (EQFKKLFSGEL) the chain is Mitochondrial intermembrane.

This sequence belongs to the mitochondrial carrier (TC 2.A.29) family.

The protein localises to the mitochondrion inner membrane. In terms of biological role, mitochondrial solute carriers shuttle metabolites, nucleotides, and cofactors through the mitochondrial inner membrane. Transports oxaloacetate and sulfate. This chain is Mitochondrial substrate carrier family protein ucpA (ucpA), found in Dictyostelium discoideum (Social amoeba).